The primary structure comprises 358 residues: Peptide chain release factor 1 (358 aa).

Q233 bears the N5-methylglutamine mark.

It belongs to the prokaryotic/mitochondrial release factor family. In terms of processing, methylated by PrmC. Methylation increases the termination efficiency of RF1.

It localises to the cytoplasm. Functionally, peptide chain release factor 1 directs the termination of translation in response to the peptide chain termination codons UAG and UAA. This Geobacillus sp. (strain WCH70) protein is Peptide chain release factor 1.